We begin with the raw amino-acid sequence, 422 residues long: Transcription initiation factor TFIID subunit 15b (422 aa).

4 disordered regions span residues 1 to 24 (MAGM…DGYG), 47 to 94 (YGGR…PNPS), 111 to 263 (ALAP…DAAT), and 368 to 422 (MAEK…SRPY). 2 stretches are compositionally biased toward gly residues: residues 8–24 (DGGG…DGYG) and 47–83 (YGGR…GGGG). Residues 84-115 (RDGDWRCPNPSCGNVNFARRVECNKCGALAPS) form a RanBP2-type zinc finger. The span at 123-133 (DRGGGGYSRGG) shows a compositional bias: gly residues. Basic and acidic residues predominate over residues 134–156 (GDSDRGGGRGGRNDSGRSYESSR). Gly residues-rich tracts occupy residues 219 to 229 (PSYGGPRGGYG) and 236 to 247 (GGRGGRSGGYDG). Over residues 252-263 (RRQEASYEDAAT) the composition is skewed to basic and acidic residues. The region spanning 280 to 371 (ARIYISNLPP…NKISVTMAEK (92 aa)) is the RRM domain. Residues 382–397 (RGGGRGGGGGGYGGGG) show a composition bias toward gly residues.

It belongs to the TAF15 family. Component of the TFIID complex. TFIID is composed of TATA binding protein (TBP) and a number of TBP-associated factors (TAFs) whose MWs range from 14-217 kDa. Interacts with TAF4, TAF4B, TAF5, TAF12B and TAF14. As to expression, expressed in roots, leaves and inflorescences.

It is found in the nucleus. TAFs are components of the transcription factor IID (TFIID) complex that is essential for mediating regulation of RNA polymerase transcription. This is Transcription initiation factor TFIID subunit 15b (TAF15B) from Arabidopsis thaliana (Mouse-ear cress).